The chain runs to 506 residues: D-alanine--D-alanyl carrier protein ligase (506 aa).

An ATP-binding site is contributed by 152–153 (TS). Residue Asp197 coordinates D-alanine. 292 to 297 (NTYGPT) contacts ATP. Residue Val301 participates in D-alanine binding. Residues Asp383, 395–398 (YRGR), and Lys494 each bind ATP. Lys494 contacts D-alanine.

This sequence belongs to the ATP-dependent AMP-binding enzyme family. DltA subfamily.

Its subcellular location is the cytoplasm. The enzyme catalyses holo-[D-alanyl-carrier protein] + D-alanine + ATP = D-alanyl-[D-alanyl-carrier protein] + AMP + diphosphate. The protein operates within cell wall biogenesis; lipoteichoic acid biosynthesis. Its function is as follows. Catalyzes the first step in the D-alanylation of lipoteichoic acid (LTA), the activation of D-alanine and its transfer onto the D-alanyl carrier protein (Dcp) DltC. In an ATP-dependent two-step reaction, forms a high energy D-alanyl-AMP intermediate, followed by transfer of the D-alanyl residue as a thiol ester to the phosphopantheinyl prosthetic group of the Dcp. D-alanylation of LTA plays an important role in modulating the properties of the cell wall in Gram-positive bacteria, influencing the net charge of the cell wall. The protein is D-alanine--D-alanyl carrier protein ligase of Lacticaseibacillus rhamnosus (Lactobacillus rhamnosus).